The primary structure comprises 369 residues: tRNA-specific 2-thiouridylase MnmA (369 aa).

Residues 12–19 (GMSGGVDS) and Met-38 each bind ATP. An interaction with target base in tRNA region spans residues 98–100 (NPD). Cys-103 (nucleophile) is an active-site residue. A disulfide bridge connects residues Cys-103 and Cys-200. Gly-128 lines the ATP pocket. Positions 150-152 (KDQ) are interaction with tRNA. Cys-200 acts as the Cysteine persulfide intermediate in catalysis. The tract at residues 312-313 (RY) is interaction with tRNA.

Belongs to the MnmA/TRMU family. As to quaternary structure, interacts with TusE.

The protein resides in the cytoplasm. The enzyme catalyses S-sulfanyl-L-cysteinyl-[protein] + uridine(34) in tRNA + AH2 + ATP = 2-thiouridine(34) in tRNA + L-cysteinyl-[protein] + A + AMP + diphosphate + H(+). Functionally, catalyzes the 2-thiolation of uridine at the wobble position (U34) of tRNA(Lys), tRNA(Glu) and tRNA(Gln), leading to the formation of s(2)U34, the first step of tRNA-mnm(5)s(2)U34 synthesis. Sulfur is provided by IscS, via a sulfur-relay system. Binds ATP and its substrate tRNAs. This Sodalis glossinidius (strain morsitans) protein is tRNA-specific 2-thiouridylase MnmA.